The primary structure comprises 158 residues: NAD(P)H-quinone oxidoreductase subunit J, chloroplastic (158 aa).

It belongs to the complex I 30 kDa subunit family. In terms of assembly, NDH is composed of at least 16 different subunits, 5 of which are encoded in the nucleus.

It is found in the plastid. The protein resides in the chloroplast thylakoid membrane. The enzyme catalyses a plastoquinone + NADH + (n+1) H(+)(in) = a plastoquinol + NAD(+) + n H(+)(out). It catalyses the reaction a plastoquinone + NADPH + (n+1) H(+)(in) = a plastoquinol + NADP(+) + n H(+)(out). In terms of biological role, NDH shuttles electrons from NAD(P)H:plastoquinone, via FMN and iron-sulfur (Fe-S) centers, to quinones in the photosynthetic chain and possibly in a chloroplast respiratory chain. The immediate electron acceptor for the enzyme in this species is believed to be plastoquinone. Couples the redox reaction to proton translocation, and thus conserves the redox energy in a proton gradient. The protein is NAD(P)H-quinone oxidoreductase subunit J, chloroplastic of Spinacia oleracea (Spinach).